The sequence spans 189 residues: Leucine repeat adapter protein 25 (189 aa).

Phosphoserine is present on serine 28. The segment at 55–81 (LSRAARAPDGPRHAAGSANLGSAAGPR) is disordered. The segment covering 68-79 (AAGSANLGSAAG) has biased composition (low complexity). Residues 86–114 (LDSALAALRKEMVGLRQLDMSLLCQLWGL) form an LRR repeat. The tract at residues 141-174 (DSSYPPDAGLSDDDEPPDASLPPDPPPLTVPQTH) is disordered. Residues 159-169 (ASLPPDPPPLT) show a composition bias toward pro residues. Serine 188 carries the post-translational modification Phosphoserine.

It belongs to the FAM89 family. In terms of assembly, interacts with SKI. Interacts (via LRR repeat) with CDC42BPA (via AGC-kinase C-terminal domain) and CDC42BPB (via AGC-kinase C-terminal domain). Interacts (via LRR repeat) with LIMK1 (via LIM zinc-binding domains). Forms a tripartite complex with CDC42BPA, CDC42BPB and LIMK1.

The protein resides in the cytoplasm. Its subcellular location is the cell projection. It is found in the lamellipodium. Functionally, negatively regulates TGF-beta-induced signaling; in cooperation with SKI prevents the translocation of SMAD2 from the nucleus to the cytoplasm in response to TGF-beta. Acts as an adapter that mediates the specific recognition of LIMK1 by CDC42BPA and CDC42BPB in the lamellipodia. LRAP25-mediated CDC42BPA/CDC42BPB targeting to LIMK1 and the lamellipodium results in LIMK1 activation and the subsequent phosphorylation of CFL1 which is important for lamellipodial F-actin regulation. This is Leucine repeat adapter protein 25 from Rattus norvegicus (Rat).